The chain runs to 343 residues: Anthranilate phosphoribosyltransferase (343 aa).

Residues G78, 81–82 (GD), T86, 88–91 (NIST), 106–114 (KHGNRSVSS), and S118 contribute to the 5-phospho-alpha-D-ribose 1-diphosphate site. An anthranilate-binding site is contributed by G78. Mg(2+) is bound at residue S90. N109 lines the anthranilate pocket. Residue R164 coordinates anthranilate. 2 residues coordinate Mg(2+): D223 and E224.

Belongs to the anthranilate phosphoribosyltransferase family. Homodimer. Requires Mg(2+) as cofactor.

It carries out the reaction N-(5-phospho-beta-D-ribosyl)anthranilate + diphosphate = 5-phospho-alpha-D-ribose 1-diphosphate + anthranilate. Its pathway is amino-acid biosynthesis; L-tryptophan biosynthesis; L-tryptophan from chorismate: step 2/5. Functionally, catalyzes the transfer of the phosphoribosyl group of 5-phosphorylribose-1-pyrophosphate (PRPP) to anthranilate to yield N-(5'-phosphoribosyl)-anthranilate (PRA). This is Anthranilate phosphoribosyltransferase from Chlamydia caviae (strain ATCC VR-813 / DSM 19441 / 03DC25 / GPIC) (Chlamydophila caviae).